The primary structure comprises 339 residues: Ornithine carbamoyltransferase, catabolic (339 aa).

Carbamoyl phosphate is bound by residues 57-60 (STRT), Q84, R108, and 135-138 (HPTQ). Residues N167, D231, and 235-236 (SM) each bind L-ornithine. Carbamoyl phosphate-binding positions include 274–275 (CL) and R319.

Belongs to the aspartate/ornithine carbamoyltransferase superfamily. OTCase family.

It is found in the cytoplasm. The catalysed reaction is carbamoyl phosphate + L-ornithine = L-citrulline + phosphate + H(+). It participates in amino-acid degradation; L-arginine degradation via ADI pathway; carbamoyl phosphate from L-arginine: step 2/2. Functionally, reversibly catalyzes the transfer of the carbamoyl group from carbamoyl phosphate (CP) to the N(epsilon) atom of ornithine (ORN) to produce L-citrulline. This is Ornithine carbamoyltransferase, catabolic (arcB) from Enterococcus faecalis (strain ATCC 700802 / V583).